A 448-amino-acid polypeptide reads, in one-letter code: Adenosylhomocysteinase (448 aa).

Residues Thr61, Asp136, and Glu161 each contribute to the substrate site. 162-164 (TTA) is an NAD(+) binding site. Substrate is bound by residues Lys191 and Asp195. Residues Asn196, 225-230 (GYGDVG), Glu248, Asn283, 304-306 (IGH), and Asn360 each bind NAD(+).

It belongs to the adenosylhomocysteinase family. Requires NAD(+) as cofactor.

It localises to the cytoplasm. It carries out the reaction S-adenosyl-L-homocysteine + H2O = L-homocysteine + adenosine. The protein operates within amino-acid biosynthesis; L-homocysteine biosynthesis; L-homocysteine from S-adenosyl-L-homocysteine: step 1/1. May play a key role in the regulation of the intracellular concentration of adenosylhomocysteine. The chain is Adenosylhomocysteinase from Rhodopirellula baltica (strain DSM 10527 / NCIMB 13988 / SH1).